A 280-amino-acid chain; its full sequence is B3 domain-containing protein At5g25470 (280 aa).

Residues 20-114 (WKSLSPGQNW…FLEVQIFKND (95 aa)) constitute a DNA-binding region (TF-B3 1). Positions 122–153 (PPEVEPETEPFHPTTPKNSHKETTTASASASA) are disordered. The segment at residues 183-276 (YFVKTLTKGN…ELVTAVRVHF (94 aa)) is a DNA-binding region (TF-B3 2).

The protein localises to the nucleus. In Arabidopsis thaliana (Mouse-ear cress), this protein is B3 domain-containing protein At5g25470.